We begin with the raw amino-acid sequence, 282 residues long: 2-dehydro-3-deoxyphosphooctonate aldolase (282 aa).

This sequence belongs to the KdsA family.

It localises to the cytoplasm. It carries out the reaction D-arabinose 5-phosphate + phosphoenolpyruvate + H2O = 3-deoxy-alpha-D-manno-2-octulosonate-8-phosphate + phosphate. Its pathway is carbohydrate biosynthesis; 3-deoxy-D-manno-octulosonate biosynthesis; 3-deoxy-D-manno-octulosonate from D-ribulose 5-phosphate: step 2/3. The protein operates within bacterial outer membrane biogenesis; lipopolysaccharide biosynthesis. This Shewanella oneidensis (strain ATCC 700550 / JCM 31522 / CIP 106686 / LMG 19005 / NCIMB 14063 / MR-1) protein is 2-dehydro-3-deoxyphosphooctonate aldolase.